A 594-amino-acid polypeptide reads, in one-letter code: DNA ligase 2 (594 aa).

Glutamate 250 is a binding site for ATP. The active-site N6-AMP-lysine intermediate is lysine 252. Arginine 257, arginine 273, glutamate 303, phenylalanine 343, arginine 419, and lysine 425 together coordinate ATP.

Belongs to the ATP-dependent DNA ligase family. Mg(2+) serves as cofactor.

The enzyme catalyses ATP + (deoxyribonucleotide)n-3'-hydroxyl + 5'-phospho-(deoxyribonucleotide)m = (deoxyribonucleotide)n+m + AMP + diphosphate.. Functionally, DNA ligase that seals nicks in double-stranded DNA during DNA replication, DNA recombination and DNA repair. The polypeptide is DNA ligase 2 (Korarchaeum cryptofilum (strain OPF8)).